Reading from the N-terminus, the 131-residue chain is Small ribosomal subunit protein bS6 (131 aa).

The interval 94–131 (DAVTEESQLAKNADEKRARKATTRRPDSNDDNDNHSDD) is disordered. Residues 117-131 (RRPDSNDDNDNHSDD) show a composition bias toward basic and acidic residues.

Belongs to the bacterial ribosomal protein bS6 family.

Binds together with bS18 to 16S ribosomal RNA. The protein is Small ribosomal subunit protein bS6 of Psychrobacter cryohalolentis (strain ATCC BAA-1226 / DSM 17306 / VKM B-2378 / K5).